The following is a 436-amino-acid chain: UDP-N-acetylglucosamine 1-carboxyvinyltransferase 1 (436 aa).

22–23 lines the phosphoenolpyruvate pocket; that stretch reads KN. Arg-93 contacts UDP-N-acetyl-alpha-D-glucosamine. Residue Cys-117 is the Proton donor of the active site. Cys-117 carries the 2-(S-cysteinyl)pyruvic acid O-phosphothioketal modification. Residues 122–126, Asp-306, and Val-328 each bind UDP-N-acetyl-alpha-D-glucosamine; that span reads RPIDQ.

Belongs to the EPSP synthase family. MurA subfamily.

Its subcellular location is the cytoplasm. It carries out the reaction phosphoenolpyruvate + UDP-N-acetyl-alpha-D-glucosamine = UDP-N-acetyl-3-O-(1-carboxyvinyl)-alpha-D-glucosamine + phosphate. It participates in cell wall biogenesis; peptidoglycan biosynthesis. In terms of biological role, cell wall formation. Adds enolpyruvyl to UDP-N-acetylglucosamine. The polypeptide is UDP-N-acetylglucosamine 1-carboxyvinyltransferase 1 (Bacillus licheniformis (strain ATCC 14580 / DSM 13 / JCM 2505 / CCUG 7422 / NBRC 12200 / NCIMB 9375 / NCTC 10341 / NRRL NRS-1264 / Gibson 46)).